The chain runs to 312 residues: MTQSTPIRIATRKSPLALWQAHFVKDALQAAHPGLEVELVTMVTKGDIILDTPLAKVGGKGLFVKELEVAMLEGRADLAVHSMKDVPVDFPEGLGLVTICEREDPRDAFVSNTYNNIDELPQGAVVGTCSLRRQCQLKEYRPDLVIKELRGNVGTRLGKLDAGEYDAIILAAAGLKRLELEERIRSFIEPEQSLPAVGQGAVGIECRVDDERLLKLLEPLNHQDTADRVRCERAMNLTLEGGCQVPIGSYSLLDGDNIWLRALVGEPDGSLIVRGEIRGHRNDAEALGVQLANELLENGARDILTKLYADHE.

Cysteine 243 bears the S-(dipyrrolylmethanemethyl)cysteine mark.

This sequence belongs to the HMBS family. Monomer. It depends on dipyrromethane as a cofactor.

It catalyses the reaction 4 porphobilinogen + H2O = hydroxymethylbilane + 4 NH4(+). It participates in porphyrin-containing compound metabolism; protoporphyrin-IX biosynthesis; coproporphyrinogen-III from 5-aminolevulinate: step 2/4. Tetrapolymerization of the monopyrrole PBG into the hydroxymethylbilane pre-uroporphyrinogen in several discrete steps. This is Porphobilinogen deaminase from Vibrio campbellii (strain ATCC BAA-1116).